The primary structure comprises 397 residues: Na(+)/H(+) antiporter NhaA 1 (397 aa).

12 helical membrane-spanning segments follow: residues 15–35 (FQLE…ALII), 42–62 (YLYG…LNIA), 65–85 (LLLW…GLEV), 101–121 (ILPA…YWFI), 129–149 (VAGW…VLAL), 160–180 (LFLM…IALF), 183–203 (GTLS…LVAM), 219–241 (LILW…ALAF), 265–285 (WVAY…SLAG), 299–319 (ITIG…WVAV), 335–355 (ILGV…VGSL), and 370–390 (MGIL…TAMA).

The protein belongs to the NhaA Na(+)/H(+) (TC 2.A.33) antiporter family.

It localises to the cell inner membrane. It carries out the reaction Na(+)(in) + 2 H(+)(out) = Na(+)(out) + 2 H(+)(in). In terms of biological role, na(+)/H(+) antiporter that extrudes sodium in exchange for external protons. This is Na(+)/H(+) antiporter NhaA 1 from Pseudomonas putida (strain ATCC 47054 / DSM 6125 / CFBP 8728 / NCIMB 11950 / KT2440).